The following is a 395-amino-acid chain: Major capsid protein P3 (395 aa).

As to quaternary structure, homotrimer.

Its subcellular location is the virion. Major capsid protein self-assembles to form an icosahedral capsid with a pseudo T=25 symmetry, about 66 nm in diameter, and consisting of 240 capsid proteins trimers. The capsid encapsulates an inner membrane and the genomic dsDNA genome. The major coat protein P3 and two assembly factors (P10 and P17) are needed during the assembly of the virus particle inside the host cell, when the capsid protein multimers are capable of enclosing the host-derived membrane, containing the virus-encoded membrane-associated proteins. This is Major capsid protein P3 (III) from Acinetobacter calcoaceticus (Arthrobacter siderocapsulatus).